Consider the following 150-residue polypeptide: 3-hydroxyacyl-[acyl-carrier-protein] dehydratase FabZ (150 aa).

His-54 is an active-site residue.

It belongs to the thioester dehydratase family. FabZ subfamily.

Its subcellular location is the cytoplasm. It catalyses the reaction a (3R)-hydroxyacyl-[ACP] = a (2E)-enoyl-[ACP] + H2O. Its function is as follows. Involved in unsaturated fatty acids biosynthesis. Catalyzes the dehydration of short chain beta-hydroxyacyl-ACPs and long chain saturated and unsaturated beta-hydroxyacyl-ACPs. The protein is 3-hydroxyacyl-[acyl-carrier-protein] dehydratase FabZ of Vibrio campbellii (strain ATCC BAA-1116).